The following is a 215-amino-acid chain: Thymidylate kinase (215 aa).

10 to 17 contributes to the ATP binding site; it reads GGEGVGKT.

Belongs to the thymidylate kinase family.

It catalyses the reaction dTMP + ATP = dTDP + ADP. Phosphorylation of dTMP to form dTDP in both de novo and salvage pathways of dTTP synthesis. The chain is Thymidylate kinase from Bartonella henselae (strain ATCC 49882 / DSM 28221 / CCUG 30454 / Houston 1) (Rochalimaea henselae).